Here is a 196-residue protein sequence, read N- to C-terminus: NADH-quinone oxidoreductase subunit B (196 aa).

[4Fe-4S] cluster-binding residues include Cys75, Cys76, Cys140, and Cys170.

Belongs to the complex I 20 kDa subunit family. NDH-1 is composed of 14 different subunits. Subunits NuoB, C, D, E, F, and G constitute the peripheral sector of the complex. It depends on [4Fe-4S] cluster as a cofactor.

The protein resides in the cell inner membrane. It catalyses the reaction a quinone + NADH + 5 H(+)(in) = a quinol + NAD(+) + 4 H(+)(out). In terms of biological role, NDH-1 shuttles electrons from NADH, via FMN and iron-sulfur (Fe-S) centers, to quinones in the respiratory chain. Couples the redox reaction to proton translocation (for every two electrons transferred, four hydrogen ions are translocated across the cytoplasmic membrane), and thus conserves the redox energy in a proton gradient. The protein is NADH-quinone oxidoreductase subunit B of Caulobacter sp. (strain K31).